Reading from the N-terminus, the 274-residue chain is 4-diphosphocytidyl-2-C-methyl-D-erythritol kinase (274 aa).

K10 is an active-site residue. ATP is bound at residue 101–111 (PTQAGLGGGSA). Residue D143 is part of the active site.

Belongs to the GHMP kinase family. IspE subfamily.

The enzyme catalyses 4-CDP-2-C-methyl-D-erythritol + ATP = 4-CDP-2-C-methyl-D-erythritol 2-phosphate + ADP + H(+). Its pathway is isoprenoid biosynthesis; isopentenyl diphosphate biosynthesis via DXP pathway; isopentenyl diphosphate from 1-deoxy-D-xylulose 5-phosphate: step 3/6. Catalyzes the phosphorylation of the position 2 hydroxy group of 4-diphosphocytidyl-2C-methyl-D-erythritol. The polypeptide is 4-diphosphocytidyl-2-C-methyl-D-erythritol kinase (Helicobacter pylori (strain J99 / ATCC 700824) (Campylobacter pylori J99)).